The following is an 85-amino-acid chain: Large ribosomal subunit protein bL31B (85 aa).

The protein belongs to the bacterial ribosomal protein bL31 family. Type B subfamily. Part of the 50S ribosomal subunit.

This is Large ribosomal subunit protein bL31B from Pseudarthrobacter chlorophenolicus (strain ATCC 700700 / DSM 12829 / CIP 107037 / JCM 12360 / KCTC 9906 / NCIMB 13794 / A6) (Arthrobacter chlorophenolicus).